We begin with the raw amino-acid sequence, 229 residues long: Uracil-DNA glycosylase (229 aa).

The active-site Proton acceptor is the D65.

The protein belongs to the uracil-DNA glycosylase (UDG) superfamily. UNG family.

The protein localises to the cytoplasm. The enzyme catalyses Hydrolyzes single-stranded DNA or mismatched double-stranded DNA and polynucleotides, releasing free uracil.. In terms of biological role, excises uracil residues from the DNA which can arise as a result of misincorporation of dUMP residues by DNA polymerase or due to deamination of cytosine. This is Uracil-DNA glycosylase from Oceanobacillus iheyensis (strain DSM 14371 / CIP 107618 / JCM 11309 / KCTC 3954 / HTE831).